A 422-amino-acid chain; its full sequence is UDP-N-acetylglucosamine 1-carboxyvinyltransferase (422 aa).

K22–N23 is a phosphoenolpyruvate binding site. R92 contacts UDP-N-acetyl-alpha-D-glucosamine. Catalysis depends on C116, which acts as the Proton donor. C116 is subject to 2-(S-cysteinyl)pyruvic acid O-phosphothioketal. Residues R121–Q125, D305, and I327 contribute to the UDP-N-acetyl-alpha-D-glucosamine site.

This sequence belongs to the EPSP synthase family. MurA subfamily.

It is found in the cytoplasm. The enzyme catalyses phosphoenolpyruvate + UDP-N-acetyl-alpha-D-glucosamine = UDP-N-acetyl-3-O-(1-carboxyvinyl)-alpha-D-glucosamine + phosphate. It participates in cell wall biogenesis; peptidoglycan biosynthesis. Functionally, cell wall formation. Adds enolpyruvyl to UDP-N-acetylglucosamine. The polypeptide is UDP-N-acetylglucosamine 1-carboxyvinyltransferase (Sorangium cellulosum (strain So ce56) (Polyangium cellulosum (strain So ce56))).